The chain runs to 438 residues: Aminopeptidase E (438 aa).

Residues cysteine 70, histidine 362, and asparagine 383 contribute to the active site.

Belongs to the peptidase C1 family.

It is found in the cytoplasm. Functionally, can hydrolyze internal peptide bonds in Met-enkephalin and bradykinin; however, hydrolysis of alpha-, beta-, and kappa-caseins is not detected. The protein is Aminopeptidase E (pepE) of Lactobacillus helveticus (Lactobacillus suntoryeus).